The following is a 319-amino-acid chain: Fructokinase (319 aa).

The protein belongs to the carbohydrate kinase PfkB family. Expressed in swelling stolons and, at higher levels, in developing tubers. Low levels found in leaves and stems from tuberizing plants.

It carries out the reaction D-fructose + ATP = D-fructose 6-phosphate + ADP + H(+). The protein operates within glycan biosynthesis; starch biosynthesis. Functionally, may play an important role in maintaining the flux of carbon towards starch formation. This chain is Fructokinase, found in Solanum tuberosum (Potato).